The sequence spans 302 residues: Ornithine carbamoyltransferase (302 aa).

Carbamoyl phosphate is bound by residues serine 53–threonine 56, glutamine 80, arginine 104, and histidine 131–glutamine 134. L-ornithine-binding positions include asparagine 162, aspartate 219, and serine 223–methionine 224. Residues cysteine 259 to leucine 260 and arginine 287 each bind carbamoyl phosphate.

It belongs to the aspartate/ornithine carbamoyltransferase superfamily. OTCase family.

It localises to the cytoplasm. The enzyme catalyses carbamoyl phosphate + L-ornithine = L-citrulline + phosphate + H(+). It participates in amino-acid biosynthesis; L-arginine biosynthesis; L-arginine from L-ornithine and carbamoyl phosphate: step 1/3. Its function is as follows. Reversibly catalyzes the transfer of the carbamoyl group from carbamoyl phosphate (CP) to the N(epsilon) atom of ornithine (ORN) to produce L-citrulline. This chain is Ornithine carbamoyltransferase, found in Hydrogenovibrio crunogenus (strain DSM 25203 / XCL-2) (Thiomicrospira crunogena).